A 427-amino-acid chain; its full sequence is Endothelin-1 receptor (427 aa).

The N-terminal stretch at 1–20 is a signal peptide; that stretch reads METFWLRLSFWVALVGGVIS. Over 21-80 the chain is Extracellular; it reads DNPESYSTNLSIHVDSVATFHGTELSFVVTTHQPTNLALPSNGSMHNYCPQQTKITSAFK. 2 N-linked (GlcNAc...) asparagine glycosylation sites follow: Asn29 and Asn62. A helical membrane pass occupies residues 81–102; the sequence is YINTVISCTIFIVGMVGNATLL. At 103–112 the chain is on the cytoplasmic side; the sequence is RIIYQNKCMR. A helical transmembrane segment spans residues 113 to 132; that stretch reads NGPNALIASLALGDLIYVVI. The Extracellular segment spans residues 133 to 159; the sequence is DLPINVFKLLAGRWPFEQNDFGVFLCK. Cys158 and Cys239 are disulfide-bonded. Residues 160 to 181 form a helical membrane-spanning segment; sequence LFPFLQKSSVGITVLNLCALSV. Over 182 to 205 the chain is Cytoplasmic; that stretch reads DRYRAVASWSRVQGIGIPLVTAIE. The helical transmembrane segment at 206-229 threads the bilayer; sequence IVSIWILSFILAIPEAIGFVMVPF. Topologically, residues 230-256 are extracellular; it reads EYKGAQHRTCMLNATSKFMEFYQDVKD. A helical transmembrane segment spans residues 257–278; that stretch reads WWLFGFYFCMPLVCTAIFYTLM. The Cytoplasmic segment spans residues 279–306; it reads TCEMLNRRNGSLRIALSEHLKQRREVAK. Residues 307–328 traverse the membrane as a helical segment; sequence TVFCLVVIFALCWFPLHLSRIL. The Extracellular segment spans residues 329-347; the sequence is KKTVYDEMDTNRCELLSFL. A helical transmembrane segment spans residues 348–372; that stretch reads LLMDYIGINLATMNSCINPIALYFV. The Cytoplasmic segment spans residues 373 to 427; it reads SKKFKNCFQSCLCCCCYQSKSLMTSVPMNGTSIQWKNHEQNNHNTERSSHKDSIN. Ser425 is subject to Phosphoserine.

Belongs to the G-protein coupled receptor 1 family. Endothelin receptor subfamily. EDNRA sub-subfamily. Interacts with HDAC7 and KAT5.

The protein resides in the cell membrane. Functionally, receptor for endothelin-1. Mediates its action by association with G proteins that activate a phosphatidylinositol-calcium second messenger system. The rank order of binding affinities for ET-A is: ET1 &gt; ET2 &gt;&gt; ET3. In Bos taurus (Bovine), this protein is Endothelin-1 receptor.